The chain runs to 295 residues: Protoheme IX farnesyltransferase (295 aa).

Helical transmembrane passes span 8-28 (ITKPGIIFGNLISVAGGFFLA), 35-55 (GGLFLATVIGIALVIASGCVF), 83-103 (GVTLAYGGVLGVAGFSVLWFG), 107-127 (LATAFALLGFVVYVGLYSLYL), 132-152 (IYGTLVGSLSGAAPPVVGYCA), 162-182 (LTLLLIFCLWQMPHSYAIAIF), 208-228 (IFWYILAFLGATLMLTLGGYA), 229-249 (GYGYFAVAAAMGLYWLVMALR), and 263-283 (VFIFSIFTITALSIMMSIDFQ).

Belongs to the UbiA prenyltransferase family. Protoheme IX farnesyltransferase subfamily.

The protein resides in the cell inner membrane. It catalyses the reaction heme b + (2E,6E)-farnesyl diphosphate + H2O = Fe(II)-heme o + diphosphate. Its pathway is porphyrin-containing compound metabolism; heme O biosynthesis; heme O from protoheme: step 1/1. Converts heme B (protoheme IX) to heme O by substitution of the vinyl group on carbon 2 of heme B porphyrin ring with a hydroxyethyl farnesyl side group. This chain is Protoheme IX farnesyltransferase, found in Chromohalobacter salexigens (strain ATCC BAA-138 / DSM 3043 / CIP 106854 / NCIMB 13768 / 1H11).